The following is a 252-amino-acid chain: Imidazole glycerol phosphate synthase subunit HisF (252 aa).

Catalysis depends on residues D11 and D130.

The protein belongs to the HisA/HisF family. Heterodimer of HisH and HisF.

It localises to the cytoplasm. The catalysed reaction is 5-[(5-phospho-1-deoxy-D-ribulos-1-ylimino)methylamino]-1-(5-phospho-beta-D-ribosyl)imidazole-4-carboxamide + L-glutamine = D-erythro-1-(imidazol-4-yl)glycerol 3-phosphate + 5-amino-1-(5-phospho-beta-D-ribosyl)imidazole-4-carboxamide + L-glutamate + H(+). It functions in the pathway amino-acid biosynthesis; L-histidine biosynthesis; L-histidine from 5-phospho-alpha-D-ribose 1-diphosphate: step 5/9. IGPS catalyzes the conversion of PRFAR and glutamine to IGP, AICAR and glutamate. The HisF subunit catalyzes the cyclization activity that produces IGP and AICAR from PRFAR using the ammonia provided by the HisH subunit. The protein is Imidazole glycerol phosphate synthase subunit HisF of Bacillus cereus (strain ATCC 10987 / NRS 248).